A 328-amino-acid polypeptide reads, in one-letter code: Phosphoserine phosphatase (328 aa).

Catalysis depends on Asp113, which acts as the Nucleophile. Residues Asp113 and Asp115 each coordinate Mg(2+). Asp115 (proton donor) is an active-site residue. Substrate contacts are provided by residues Glu122, Arg158, 201-202 (SG), and Lys246. Asp269 is a Mg(2+) binding site. Residue Asn272 participates in substrate binding.

It belongs to the HAD-like hydrolase superfamily. SerB family. The cofactor is Mg(2+).

The catalysed reaction is O-phospho-L-serine + H2O = L-serine + phosphate. It catalyses the reaction O-phospho-D-serine + H2O = D-serine + phosphate. It participates in amino-acid biosynthesis; L-serine biosynthesis; L-serine from 3-phospho-D-glycerate: step 3/3. This is Phosphoserine phosphatase from Vibrio cholerae serotype O1 (strain ATCC 39315 / El Tor Inaba N16961).